Reading from the N-terminus, the 127-residue chain is MLSEFKAFIMRGNVLDLAVGVIIGGAFTGLVKSLTTNLIGPIIAFATGGTTDLDQLQLVITKTLTFKYGAFLNDVINFLITAFVVFLIVKFINRLFKANKQEEAKANPELEILTEIRDLLDAEKKAQ.

Helical transmembrane passes span 14–34 (VLDL…VKSL) and 69–89 (GAFL…FLIV).

It belongs to the MscL family. As to quaternary structure, homopentamer.

It is found in the cell membrane. Channel that opens in response to stretch forces in the membrane lipid bilayer. May participate in the regulation of osmotic pressure changes within the cell. In Leuconostoc mesenteroides subsp. mesenteroides (strain ATCC 8293 / DSM 20343 / BCRC 11652 / CCM 1803 / JCM 6124 / NCDO 523 / NBRC 100496 / NCIMB 8023 / NCTC 12954 / NRRL B-1118 / 37Y), this protein is Large-conductance mechanosensitive channel.